Consider the following 428-residue polypeptide: Histidinol dehydrogenase (428 aa).

The substrate site is built by S234, Q256, and H259. Zn(2+) contacts are provided by Q256 and H259. Catalysis depends on proton acceptor residues E323 and H324. Substrate is bound by residues H324, D357, E411, and H416. A Zn(2+)-binding site is contributed by D357. H416 provides a ligand contact to Zn(2+).

It belongs to the histidinol dehydrogenase family. Requires Zn(2+) as cofactor.

It catalyses the reaction L-histidinol + 2 NAD(+) + H2O = L-histidine + 2 NADH + 3 H(+). It functions in the pathway amino-acid biosynthesis; L-histidine biosynthesis; L-histidine from 5-phospho-alpha-D-ribose 1-diphosphate: step 9/9. Its function is as follows. Catalyzes the sequential NAD-dependent oxidations of L-histidinol to L-histidinaldehyde and then to L-histidine. The sequence is that of Histidinol dehydrogenase from Campylobacter jejuni subsp. jejuni serotype O:2 (strain ATCC 700819 / NCTC 11168).